We begin with the raw amino-acid sequence, 395 residues long: Dual specificity mitogen-activated protein kinase kinase 1 (395 aa).

The interval 1-24 (MPKKKPTPIQLNPNPEGTAVNGTP) is disordered. Polar residues predominate over residues 9–24 (IQLNPNPEGTAVNGTP). Positions 68–363 (FEKVSELGAG…LKQLMVHSFI (296 aa)) constitute a Protein kinase domain. ATP contacts are provided by residues 74–82 (LGAGNGGVV) and Lys97. Asp190 (proton acceptor) is an active-site residue. A phosphoserine; by RAF mark is found at Ser218 and Ser222. The segment at 284–305 (ASSELAPRPRPPGRPISSYGPD) is disordered.

This sequence belongs to the protein kinase superfamily. STE Ser/Thr protein kinase family. MAP kinase kinase subfamily. In terms of processing, activated by phosphorylation on Ser/Thr catalyzed by MAP kinase kinase kinases (RAF or MOS). As to expression, expressed in the central nervous system, kidney, liver, intestine and the hematopoietic system.

It is found in the cytoplasm. Its subcellular location is the cytoskeleton. The protein resides in the microtubule organizing center. It localises to the centrosome. The protein localises to the spindle pole body. It is found in the nucleus. It carries out the reaction L-seryl-[protein] + ATP = O-phospho-L-seryl-[protein] + ADP + H(+). It catalyses the reaction L-threonyl-[protein] + ATP = O-phospho-L-threonyl-[protein] + ADP + H(+). The enzyme catalyses L-tyrosyl-[protein] + ATP = O-phospho-L-tyrosyl-[protein] + ADP + H(+). Its function is as follows. Dual specificity protein kinase which acts as an essential component of the MAP kinase signal transduction pathway. Binding of extracellular ligands such as growth factors, cytokines and hormones to their cell-surface receptors activates the MAPK/ERK cascade, ultimately leading to phosphorylation of a threonine and a tyrosine residue in a Thr-Glu-Tyr sequence located in MAP kinases. Depending on the cellular context, this pathway mediates diverse biological functions such as cell growth, adhesion, survival and differentiation predominantly through the regulation of transcription, metabolism and cytoskeletal rearrangements. This is Dual specificity mitogen-activated protein kinase kinase 1 (map2k1) from Xenopus laevis (African clawed frog).